Here is a 110-residue protein sequence, read N- to C-terminus: Thiosulfate sulfurtransferase GlpE (110 aa).

Residues 17-105 form the Rhodanese domain; that stretch reads KKEGAVVVDI…WRATYPAETA (89 aa). Catalysis depends on C65, which acts as the Cysteine persulfide intermediate.

The protein belongs to the GlpE family.

The protein resides in the cytoplasm. The enzyme catalyses thiosulfate + hydrogen cyanide = thiocyanate + sulfite + 2 H(+). The catalysed reaction is thiosulfate + [thioredoxin]-dithiol = [thioredoxin]-disulfide + hydrogen sulfide + sulfite + 2 H(+). Transferase that catalyzes the transfer of sulfur from thiosulfate to thiophilic acceptors such as cyanide or dithiols. May function in a CysM-independent thiosulfate assimilation pathway by catalyzing the conversion of thiosulfate to sulfite, which can then be used for L-cysteine biosynthesis. In Pseudomonas putida (strain ATCC 700007 / DSM 6899 / JCM 31910 / BCRC 17059 / LMG 24140 / F1), this protein is Thiosulfate sulfurtransferase GlpE.